The primary structure comprises 480 residues: Glutamyl-tRNA(Gln) amidotransferase subunit A (480 aa).

Active-site charge relay system residues include Lys74 and Ser149. Ser173 (acyl-ester intermediate) is an active-site residue.

Belongs to the amidase family. GatA subfamily. Heterotrimer of A, B and C subunits.

It catalyses the reaction L-glutamyl-tRNA(Gln) + L-glutamine + ATP + H2O = L-glutaminyl-tRNA(Gln) + L-glutamate + ADP + phosphate + H(+). Allows the formation of correctly charged Gln-tRNA(Gln) through the transamidation of misacylated Glu-tRNA(Gln) in organisms which lack glutaminyl-tRNA synthetase. The reaction takes place in the presence of glutamine and ATP through an activated gamma-phospho-Glu-tRNA(Gln). This is Glutamyl-tRNA(Gln) amidotransferase subunit A from Prochlorococcus marinus (strain MIT 9312).